A 608-amino-acid polypeptide reads, in one-letter code: UvrABC system protein C (608 aa).

Residues 13–91 (HDAGVYRMYD…IKTYQPRYNV (79 aa)) form the GIY-YIG domain. The UVR domain maps to 201–236 (QQVLEHLIHKMEQASLALDFEEAARIRDQIQAVRAV).

Belongs to the UvrC family. Interacts with UvrB in an incision complex.

It is found in the cytoplasm. Its function is as follows. The UvrABC repair system catalyzes the recognition and processing of DNA lesions. UvrC both incises the 5' and 3' sides of the lesion. The N-terminal half is responsible for the 3' incision and the C-terminal half is responsible for the 5' incision. The polypeptide is UvrABC system protein C (Pasteurella multocida (strain Pm70)).